The chain runs to 331 residues: CRISPR-associated endonuclease Cas1 1 (331 aa).

Residues Glu161, His226, and Glu241 each contribute to the Mn(2+) site.

The protein belongs to the CRISPR-associated endonuclease Cas1 family. In terms of assembly, homodimer, forms a heterotetramer with a Cas2 homodimer. Mg(2+) serves as cofactor. It depends on Mn(2+) as a cofactor.

Its function is as follows. CRISPR (clustered regularly interspaced short palindromic repeat), is an adaptive immune system that provides protection against mobile genetic elements (viruses, transposable elements and conjugative plasmids). CRISPR clusters contain spacers, sequences complementary to antecedent mobile elements, and target invading nucleic acids. CRISPR clusters are transcribed and processed into CRISPR RNA (crRNA). Acts as a dsDNA endonuclease. Involved in the integration of spacer DNA into the CRISPR cassette. This Methanospirillum hungatei JF-1 (strain ATCC 27890 / DSM 864 / NBRC 100397 / JF-1) protein is CRISPR-associated endonuclease Cas1 1.